Reading from the N-terminus, the 244-residue chain is Eukaryotic translation initiation factor 6 (244 aa).

Phosphoserine; by CK1 is present on residues serine 174 and serine 175.

This sequence belongs to the eIF-6 family. In terms of assembly, monomer. Associates with the 60S ribosomal subunit. Post-translationally, phosphorylation at Ser-174 and Ser-175 promotes nuclear export.

The protein localises to the cytoplasm. The protein resides in the nucleus. Its subcellular location is the nucleolus. Functionally, binds to the 60S ribosomal subunit and prevents its association with the 40S ribosomal subunit to form the 80S initiation complex in the cytoplasm. Is also involved in ribosome biogenesis. Associates with pre-60S subunits in the nucleus and is involved in its nuclear export. In Schizosaccharomyces pombe (strain 972 / ATCC 24843) (Fission yeast), this protein is Eukaryotic translation initiation factor 6 (tif6).